Here is an 830-residue protein sequence, read N- to C-terminus: uncharacterized protein (830 aa).

The segment covering 1 to 12 (MEKASKNKESGV) has biased composition (basic and acidic residues). A disordered region spans residues 1–61 (MEKASKNKES…SIKSKNKKKT (61 aa)). Residues 15–25 (ANNSFLQNFGV) show a composition bias toward polar residues. The 185-residue stretch at 249–433 (TVSKSSASGG…YSLVKFLHIN (185 aa)) folds into the Helicase ATP-binding domain. 262–269 (DDMGLGKT) is an ATP binding site. The short motif at 384–387 (DEAH) is the DEAH box element. In terms of domain architecture, Helicase C-terminal spans 662–816 (EEDDTVRGLR…KSVFTSKKLT (155 aa)). Ser-712 carries the phosphoserine modification.

The protein belongs to the SNF2/RAD54 helicase family.

Its subcellular location is the nucleus. This is an uncharacterized protein from Schizosaccharomyces pombe (strain 972 / ATCC 24843) (Fission yeast).